The sequence spans 497 residues: Iron-sulfur cluster assembly factor IBA57, mitochondrial (497 aa).

The N-terminal 27 residues, 1–27 (MFISRRCRIKGFTLKNLLWFRSSSTRF), are a transit peptide targeting the mitochondrion. Positions 414–433 (PTLNPFTNKPPERTKRKQRP) are disordered.

The protein belongs to the GcvT family. CAF17/IBA57 subfamily. Interacts with CCR4, ISA1 and ISA2.

The protein resides in the mitochondrion matrix. Required for lysine and glutamate prototrophy and mitochondrial genome maintenance. Has a role in the maturation of mitochondrial aconitase-type and radical-SAM Fe/S proteins biotin synthase and lipoic acid synthase. The polypeptide is Iron-sulfur cluster assembly factor IBA57, mitochondrial (Saccharomyces cerevisiae (strain ATCC 204508 / S288c) (Baker's yeast)).